Consider the following 178-residue polypeptide: ATP-dependent protease subunit HslV (178 aa).

The active site involves Thr7. Na(+)-binding residues include Gly162, Cys165, and Thr168.

This sequence belongs to the peptidase T1B family. HslV subfamily. In terms of assembly, a double ring-shaped homohexamer of HslV is capped on each side by a ring-shaped HslU homohexamer. The assembly of the HslU/HslV complex is dependent on binding of ATP.

It localises to the cytoplasm. It catalyses the reaction ATP-dependent cleavage of peptide bonds with broad specificity.. Allosterically activated by HslU binding. Protease subunit of a proteasome-like degradation complex believed to be a general protein degrading machinery. In Burkholderia ambifaria (strain MC40-6), this protein is ATP-dependent protease subunit HslV.